The chain runs to 312 residues: Olfactory receptor 10K2 (312 aa).

Over 1–25 (MERVNETVVREVIFLGFSSLARLQQ) the chain is Extracellular. A glycan (N-linked (GlcNAc...) asparagine) is linked at Asn5. A helical transmembrane segment spans residues 26–46 (LLFVIFLLLYLFTLGTNAIII). Topologically, residues 47–54 (STIVLDRA) are cytoplasmic. Residues 55–75 (LHIPMYFFLAILSCSEICYTF) traverse the membrane as a helical segment. Residues 76-99 (IIVPKMLVDLLSQKKTISFLGCAI) are Extracellular-facing. The chain crosses the membrane as a helical span at residues 100–120 (QMFSFLFLGCSHSFLLAVMGY). Residues 121–139 (DRYIAICNPLRYSVLMGHG) are Cytoplasmic-facing. Residues 140–160 (VCMGLVAAACACGFTVAQIIT) form a helical membrane-spanning segment. Residues 161-197 (SLVFHLPFYSSNQLHHFFCDIAPVLKLASHHNHFSQI) are Extracellular-facing. Residues 198-217 (VIFMLCTLVLAIPLLLILVS) form a helical membrane-spanning segment. The Cytoplasmic segment spans residues 218-237 (YVHILSAILQFPSTLGRCKA). A helical membrane pass occupies residues 238 to 258 (FSTCVSHLIIVTVHYGCASFI). The Extracellular segment spans residues 259-271 (YLRPQSNYSSSQD). A glycan (N-linked (GlcNAc...) asparagine) is linked at Asn265. A helical transmembrane segment spans residues 272–292 (ALISVSYTIITPLFNPMIYSL). Topologically, residues 293 to 312 (RNKEFKSALCKIVRRTISLL) are cytoplasmic.

Belongs to the G-protein coupled receptor 1 family.

The protein localises to the cell membrane. Odorant receptor. The sequence is that of Olfactory receptor 10K2 (OR10K2) from Homo sapiens (Human).